Consider the following 106-residue polypeptide: Nucleoid-associated protein DP1429 (106 aa).

Belongs to the YbaB/EbfC family. As to quaternary structure, homodimer.

Its subcellular location is the cytoplasm. It is found in the nucleoid. Its function is as follows. Binds to DNA and alters its conformation. May be involved in regulation of gene expression, nucleoid organization and DNA protection. The polypeptide is Nucleoid-associated protein DP1429 (Desulfotalea psychrophila (strain LSv54 / DSM 12343)).